A 258-amino-acid polypeptide reads, in one-letter code: Tryptophan synthase alpha chain (258 aa).

Active-site proton acceptor residues include Glu-47 and Asp-58.

Belongs to the TrpA family. Tetramer of two alpha and two beta chains.

The enzyme catalyses (1S,2R)-1-C-(indol-3-yl)glycerol 3-phosphate + L-serine = D-glyceraldehyde 3-phosphate + L-tryptophan + H2O. It participates in amino-acid biosynthesis; L-tryptophan biosynthesis; L-tryptophan from chorismate: step 5/5. Its function is as follows. The alpha subunit is responsible for the aldol cleavage of indoleglycerol phosphate to indole and glyceraldehyde 3-phosphate. The chain is Tryptophan synthase alpha chain from Bacillus cereus (strain G9842).